Here is a 754-residue protein sequence, read N- to C-terminus: Ribosomal RNA large subunit methyltransferase K/L (754 aa).

Residues 46–157 (TAYRLCLWSR…RGEAILSLDL (112 aa)) enclose the THUMP domain.

Belongs to the methyltransferase superfamily. RlmKL family.

It is found in the cytoplasm. It carries out the reaction guanosine(2445) in 23S rRNA + S-adenosyl-L-methionine = N(2)-methylguanosine(2445) in 23S rRNA + S-adenosyl-L-homocysteine + H(+). The catalysed reaction is guanosine(2069) in 23S rRNA + S-adenosyl-L-methionine = N(2)-methylguanosine(2069) in 23S rRNA + S-adenosyl-L-homocysteine + H(+). Specifically methylates the guanine in position 2445 (m2G2445) and the guanine in position 2069 (m7G2069) of 23S rRNA. The sequence is that of Ribosomal RNA large subunit methyltransferase K/L from Pseudomonas fluorescens (strain ATCC BAA-477 / NRRL B-23932 / Pf-5).